Here is a 205-residue protein sequence, read N- to C-terminus: Ephrin-A1 (205 aa).

An N-terminal signal peptide occupies residues Met1 to Ala18. An Ephrin RBD domain is found at Asp19–Ile151. N-linked (GlcNAc...) asparagine glycosylation is present at Asn26. 2 cysteine pairs are disulfide-bonded: Cys51–Cys92 and Cys80–Cys140. Ser182 carries the GPI-anchor amidated serine lipid modification. A propeptide spans Ala183 to Pro205 (removed in mature form).

It belongs to the ephrin family. Monomer. Homodimer. Forms heterodimers with EPHA2. Binds to the receptor tyrosine kinases EPHA2, EPHA3, EPHA4, EPHA5, EPHA6 and EPHA7. Also binds with low affinity to EPHA1. Post-translationally, undergoes proteolysis by a metalloprotease to give rise to a soluble monomeric form. In terms of processing, N-Glycosylation is required for binding to EPHA2 receptor and inducing its internalization. As to expression, brain. Down-regulated in primary glioma tissues compared to the normal tissues. The soluble monomeric form is expressed in the glioblastoma multiforme (GBM) and breast cancer cells (at protein level).

The protein resides in the cell membrane. It localises to the secreted. Functionally, cell surface GPI-bound ligand for Eph receptors, a family of receptor tyrosine kinases which are crucial for migration, repulsion and adhesion during neuronal, vascular and epithelial development. Binds promiscuously Eph receptors residing on adjacent cells, leading to contact-dependent bidirectional signaling into neighboring cells. Plays an important role in angiogenesis and tumor neovascularization. The recruitment of VAV2, VAV3 and PI3-kinase p85 subunit by phosphorylated EPHA2 is critical for EFNA1-induced RAC1 GTPase activation and vascular endothelial cell migration and assembly. Exerts anti-oncogenic effects in tumor cells through activation and down-regulation of EPHA2. Activates EPHA2 by inducing tyrosine phosphorylation which leads to its internalization and degradation. Acts as a negative regulator in the tumorigenesis of gliomas by down-regulating EPHA2 and FAK. Can evoke collapse of embryonic neuronal growth cone and regulates dendritic spine morphogenesis. The sequence is that of Ephrin-A1 (EFNA1) from Homo sapiens (Human).